The following is an 81-amino-acid chain: Putative sulfur carrier protein VNG_5061C/VNG_5236C/VNG_6059C/VNG_6467C (81 aa).

The Cysteine persulfide intermediate role is filled by Cys-18.

Belongs to the sulfur carrier protein TusA family.

The sequence is that of Putative sulfur carrier protein VNG_5061C/VNG_5236C/VNG_6059C/VNG_6467C from Halobacterium salinarum (strain ATCC 700922 / JCM 11081 / NRC-1) (Halobacterium halobium).